Here is a 410-residue protein sequence, read N- to C-terminus: Proteasomal ubiquitin receptor ADRM1 (410 aa).

The Pru domain maps to 17–130 (SSSKYLVEFR…RKVNEYLNNP (114 aa)). Phosphoserine is present on S18. Low complexity predominate over residues 191-257 (GSGGPATSSS…PAAQTPSLPA (67 aa)). Disordered stretches follow at residues 191-264 (GSGG…SSTQ) and 381-410 (FAKA…MSLD). One can recognise a DEUBAD domain in the interval 281–395 (PAMPTEGSGV…EGSDSKTDDG (115 aa)). Basic and acidic residues predominate over residues 381–401 (FAKAMEGSDSKTDDGDSKDKK).

It belongs to the ADRM1 family. As to quaternary structure, component of the 19S proteasome regulatory particle complex. The 26S proteasome consists of a 20S core particle (CP) and two 19S regulatory subunits (RP).

The protein localises to the cytoplasm. Its subcellular location is the nucleus. Functionally, component of the 26S proteasome, a multiprotein complex involved in the ATP-dependent degradation of ubiquitinated proteins. This complex plays a key role in the maintenance of protein homeostasis by removing misfolded or damaged proteins, which could impair cellular functions, and by removing proteins whose functions are no longer required. Therefore, the proteasome participates in numerous cellular processes, including cell cycle progression, apoptosis, or DNA damage repair. Within the complex, functions as a proteasomal ubiquitin receptor. This Danio rerio (Zebrafish) protein is Proteasomal ubiquitin receptor ADRM1 (adrm1b).